Reading from the N-terminus, the 579-residue chain is Peptidyl-prolyl cis-trans isomerase-like 2 (579 aa).

A U-box domain is found at 42–115 (RRLPFNFCSL…GEYVDPVTYK (74 aa)). The interval 227 to 261 (AERAQRAESGAASKGLTKPGMSATAASQKTVSHQA) is disordered. The span at 250-259 (TAASQKTVSH) shows a compositional bias: polar residues. Positions 311–470 (QKGYARISTT…PDIRIKDVTI (160 aa)) constitute a PPIase cyclophilin-type domain. The interval 555-579 (EGPEPEPAKKKFKGGGGFGDFSSWD) is disordered.

It belongs to the cyclophilin-type PPIase family. PPIL2 subfamily.

It is found in the nucleus. The catalysed reaction is [protein]-peptidylproline (omega=180) = [protein]-peptidylproline (omega=0). It carries out the reaction S-ubiquitinyl-[E2 ubiquitin-conjugating enzyme]-L-cysteine + [acceptor protein]-L-lysine = [E2 ubiquitin-conjugating enzyme]-L-cysteine + N(6)-ubiquitinyl-[acceptor protein]-L-lysine.. It functions in the pathway protein modification; protein ubiquitination. In terms of biological role, may catalyze the cis-trans isomerization of proline imidic peptide bonds in oligopeptides thereby assisting the folding of proteins. May also function as a chaperone, playing a role in intracellular transport of proteins. May also have a protein ubiquitin ligase activity acting as an E3 ubiquitin protein ligase or as a ubiquitin-ubiquitin ligase promoting elongation of ubiquitin chains on proteins. The chain is Peptidyl-prolyl cis-trans isomerase-like 2 (cyp8) from Aspergillus fumigatus (strain ATCC MYA-4609 / CBS 101355 / FGSC A1100 / Af293) (Neosartorya fumigata).